The following is a 372-amino-acid chain: uncharacterized protein (372 aa).

Positions methionine 1–glycine 33 are cleaved as a signal peptide.

This sequence to K.pneumoniae RomA.

This is an uncharacterized protein from Mycobacterium bovis (strain ATCC BAA-935 / AF2122/97).